An 848-amino-acid polypeptide reads, in one-letter code: Aryl hydrocarbon receptor (848 aa).

Positions 1-9 are excised as a propeptide; sequence MSSGANITY. Positions 1 to 38 are disordered; it reads MSSGANITYASRKRRKPVQKTVKPIPAEGIKSNPSKRH. 2 consecutive short sequence motifs (nuclear localization signal) follow at residues 12 to 15 and 36 to 41; these read RKRR and KRHRDR. The bHLH domain maps to 26–79; that stretch reads PAEGIKSNPSKRHRDRLNTELDRLASLLPFPQDVINKLDKLSVLRLSVSYLRAK. Residues 37–65 are DNA-binding; the sequence is RHRDRLNTELDRLASLLPFPQDVINKLDK. Required for maintaining the overall integrity of the AHR:ARNT heterodimer and its transcriptional activity stretches follow at residues 49 to 81, 116 to 124, and 260 to 262; these read LASLLPFPQDVINKLDKLSVLRLSVSYLRAKSF, LLQALNGFV, and FAI. Positions 63 to 71 match the Nuclear export signal motif; that stretch reads LDKLSVLRL. The PAS 1 domain occupies 116-179; it reads LLQALNGFVL…RQLHWALNPD (64 aa). In terms of domain architecture, PAS 2 spans 269-336; the sequence is PSILEIRTKN…CAESHIRMIK (68 aa). Residues 342 to 380 enclose the PAC domain; the sequence is MTVFRLFAKHSRWRWVQSNARLIYRNGRPDYIIATQRPL. The tract at residues 421 to 449 is disordered; it reads LPIRTKSNTSRKDWAPQSTPSKDSFHPSS. Residues 436-449 are compositionally biased toward polar residues; sequence PQSTPSKDSFHPSS.

As to quaternary structure, homodimer. Heterodimer; efficient DNA binding requires dimerization with another bHLH protein. Interacts with ARNT; the heterodimer ARNT:AHR binds to core DNA sequence 5'-TGCGTG-3' within the dioxin response element (DRE) of target gene promoters and activates their transcription. Binds MYBBP1A. Interacts with coactivators including SRC-1, RIP140 and NOCA7, and with the corepressor SMRT. Interacts with NEDD8 and IVNS1ABP. Interacts with BMAL1. Interacts with HSP90AB1. Interacts with TIPARP; leading to mono-ADP-ribosylation of AHR and subsequent inhibition of AHR. Post-translationally, mono-ADP-ribosylated, leading to inhibit transcription activator activity of AHR. As to expression, expressed in all tissues tested including brain, heart, kidney, liver, lung, muscle, ovary, skin, spleen and thymus.

It localises to the cytoplasm. The protein resides in the nucleus. Ligand-activated transcription factor that enables cells to adapt to changing conditions by sensing compounds from the environment, diet, microbiome and cellular metabolism, and which plays important roles in development, immunity and cancer. Upon ligand binding, translocates into the nucleus, where it heterodimerizes with ARNT and induces transcription by binding to xenobiotic response elements (XRE). Regulates a variety of biological processes, including angiogenesis, hematopoiesis, drug and lipid metabolism, cell motility and immune modulation. Xenobiotics can act as ligands: upon xenobiotic-binding, activates the expression of multiple phase I and II xenobiotic chemical metabolizing enzyme genes (such as the CYP1A1 gene). Mediates biochemical and toxic effects of halogenated aromatic hydrocarbons. Next to xenobiotics, natural ligands derived from plants, microbiota, and endogenous metabolism are potent AHR agonists. Tryptophan (Trp) derivatives constitute an important class of endogenous AHR ligands. Acts as a negative regulator of anti-tumor immunity: indoles and kynurenic acid generated by Trp catabolism act as ligand and activate AHR, thereby promoting AHR-driven cancer cell motility and suppressing adaptive immunity. Regulates the circadian clock by inhibiting the basal and circadian expression of the core circadian component PER1. Inhibits PER1 by repressing the CLOCK-BMAL1 heterodimer mediated transcriptional activation of PER1. The heterodimer ARNT:AHR binds to core DNA sequence 5'-TGCGTG-3' within the dioxin response element (DRE) of target gene promoters and activates their transcription. The sequence is that of Aryl hydrocarbon receptor (Ahr) from Mus musculus (Mouse).